Here is a 498-residue protein sequence, read N- to C-terminus: ATP synthase subunit beta, chloroplastic (498 aa).

172–179 is an ATP binding site; the sequence is GGAGVGKT.

Belongs to the ATPase alpha/beta chains family. F-type ATPases have 2 components, CF(1) - the catalytic core - and CF(0) - the membrane proton channel. CF(1) has five subunits: alpha(3), beta(3), gamma(1), delta(1), epsilon(1). CF(0) has four main subunits: a(1), b(1), b'(1) and c(9-12).

It is found in the plastid. It localises to the chloroplast thylakoid membrane. It catalyses the reaction ATP + H2O + 4 H(+)(in) = ADP + phosphate + 5 H(+)(out). In terms of biological role, produces ATP from ADP in the presence of a proton gradient across the membrane. The catalytic sites are hosted primarily by the beta subunits. The chain is ATP synthase subunit beta, chloroplastic from Agapanthus africanus (Lily of the Nile).